A 790-amino-acid polypeptide reads, in one-letter code: Protein SEY1 (790 aa).

The Cytoplasmic portion of the chain corresponds to 1 to 692 (MELSEGELSH…KRSIVQHITQ (692 aa)). Residues 55 to 284 (GNNYHIISVF…VNNELFKPEY (230 aa)) form the GB1/RHD3-type G domain. 65–72 (GSQSTGKS) serves as a coordination point for GTP. Residues 693 to 713 (IPYYIYLIILVLGWNEFMAII) traverse the membrane as a helical segment. At 714–716 (RNP) the chain is on the lumenal side. Residues 717–737 (LFFSLSIVLGATVYVLYYLNL) traverse the membrane as a helical segment. The Cytoplasmic portion of the chain corresponds to 738 to 790 (LKPAMLVAQRTMDEVIIMAKTKLREVLIDDHEVTGRQLNKIAGGKENIELDDM).

This sequence belongs to the TRAFAC class dynamin-like GTPase superfamily. GB1/RHD3 GTPase family. RHD3 subfamily.

The protein localises to the endoplasmic reticulum membrane. In terms of biological role, cooperates with the reticulon proteins and tubule-shaping DP1 family proteins to generate and maintain the structure of the tubular endoplasmic reticulum network. Has GTPase activity, which is required for its function in ER organization. This is Protein SEY1 from Candida dubliniensis (strain CD36 / ATCC MYA-646 / CBS 7987 / NCPF 3949 / NRRL Y-17841) (Yeast).